The sequence spans 506 residues: Histidine ammonia-lyase (506 aa).

A cross-link (5-imidazolinone (Ala-Gly)) is located at residues 143-145 (ASG). Residue S144 is modified to 2,3-didehydroalanine (Ser).

Belongs to the PAL/histidase family. Contains an active site 4-methylidene-imidazol-5-one (MIO), which is formed autocatalytically by cyclization and dehydration of residues Ala-Ser-Gly.

It is found in the cytoplasm. The catalysed reaction is L-histidine = trans-urocanate + NH4(+). It functions in the pathway amino-acid degradation; L-histidine degradation into L-glutamate; N-formimidoyl-L-glutamate from L-histidine: step 1/3. The chain is Histidine ammonia-lyase from Enterobacter sp. (strain 638).